Reading from the N-terminus, the 36-residue chain is Photosystem II reaction center protein Y (36 aa).

Residues 1–4 lie on the Lumenal side of the membrane; the sequence is MDSR. A helical transmembrane segment spans residues 5–23; sequence LLVVLIPVLAAASWAVYNI. Residues 24 to 36 are Stromal-facing; sequence GRVALQQFRKMTS.

Belongs to the PsbY family. PSII is composed of 1 copy each of membrane proteins PsbA, PsbB, PsbC, PsbD, PsbE, PsbF, PsbH, PsbI, PsbJ, PsbK, PsbL, PsbM, PsbT, PsbX, PsbY, PsbZ, Psb30/Ycf12, at least 3 peripheral proteins of the oxygen-evolving complex and a large number of cofactors. It forms dimeric complexes.

Its subcellular location is the plastid. The protein resides in the chloroplast thylakoid membrane. Loosely associated component of the core of photosystem II (PSII), it is not always seen in crystals. PSII is a light-driven water plastoquinone oxidoreductase, using light energy to abstract electrons from H(2)O, generating a proton gradient subsequently used for ATP formation. The sequence is that of Photosystem II reaction center protein Y from Pyropia yezoensis (Susabi-nori).